The sequence spans 81 residues: ATP synthase subunit c, chloroplastic (81 aa).

2 helical membrane-spanning segments follow: residues 3–23 and 57–77; these read PLIS…ASIG and LAFM…LLFA.

Belongs to the ATPase C chain family. In terms of assembly, F-type ATPases have 2 components, F(1) - the catalytic core - and F(0) - the membrane proton channel. F(1) has five subunits: alpha(3), beta(3), gamma(1), delta(1), epsilon(1). F(0) has four main subunits: a(1), b(1), b'(1) and c(10-14). The alpha and beta chains form an alternating ring which encloses part of the gamma chain. F(1) is attached to F(0) by a central stalk formed by the gamma and epsilon chains, while a peripheral stalk is formed by the delta, b and b' chains.

Its subcellular location is the plastid. The protein localises to the chloroplast thylakoid membrane. In terms of biological role, f(1)F(0) ATP synthase produces ATP from ADP in the presence of a proton or sodium gradient. F-type ATPases consist of two structural domains, F(1) containing the extramembraneous catalytic core and F(0) containing the membrane proton channel, linked together by a central stalk and a peripheral stalk. During catalysis, ATP synthesis in the catalytic domain of F(1) is coupled via a rotary mechanism of the central stalk subunits to proton translocation. Functionally, key component of the F(0) channel; it plays a direct role in translocation across the membrane. A homomeric c-ring of between 10-14 subunits forms the central stalk rotor element with the F(1) delta and epsilon subunits. The chain is ATP synthase subunit c, chloroplastic from Gossypium barbadense (Sea Island cotton).